The primary structure comprises 264 residues: Tryptophan synthase alpha chain (264 aa).

Residues Glu-49 and Asp-60 each act as proton acceptor in the active site.

This sequence belongs to the TrpA family. In terms of assembly, tetramer of two alpha and two beta chains.

The catalysed reaction is (1S,2R)-1-C-(indol-3-yl)glycerol 3-phosphate + L-serine = D-glyceraldehyde 3-phosphate + L-tryptophan + H2O. Its pathway is amino-acid biosynthesis; L-tryptophan biosynthesis; L-tryptophan from chorismate: step 5/5. The alpha subunit is responsible for the aldol cleavage of indoleglycerol phosphate to indole and glyceraldehyde 3-phosphate. The protein is Tryptophan synthase alpha chain of Geotalea daltonii (strain DSM 22248 / JCM 15807 / FRC-32) (Geobacter daltonii).